Reading from the N-terminus, the 159-residue chain is 2-C-methyl-D-erythritol 2,4-cyclodiphosphate synthase (159 aa).

A divalent metal cation is bound by residues Asp10 and His12. Residues 10 to 12 and 36 to 37 contribute to the 4-CDP-2-C-methyl-D-erythritol 2-phosphate site; these read DVH and HS. His44 serves as a coordination point for a divalent metal cation. 4-CDP-2-C-methyl-D-erythritol 2-phosphate contacts are provided by residues 58–60, 134–137, Phe141, and Arg144; these read DIG and TTTE.

The protein belongs to the IspF family. Homotrimer. A divalent metal cation is required as a cofactor.

The catalysed reaction is 4-CDP-2-C-methyl-D-erythritol 2-phosphate = 2-C-methyl-D-erythritol 2,4-cyclic diphosphate + CMP. It participates in isoprenoid biosynthesis; isopentenyl diphosphate biosynthesis via DXP pathway; isopentenyl diphosphate from 1-deoxy-D-xylulose 5-phosphate: step 4/6. Functionally, involved in the biosynthesis of isopentenyl diphosphate (IPP) and dimethylallyl diphosphate (DMAPP), two major building blocks of isoprenoid compounds. Catalyzes the conversion of 4-diphosphocytidyl-2-C-methyl-D-erythritol 2-phosphate (CDP-ME2P) to 2-C-methyl-D-erythritol 2,4-cyclodiphosphate (ME-CPP) with a corresponding release of cytidine 5-monophosphate (CMP). This chain is 2-C-methyl-D-erythritol 2,4-cyclodiphosphate synthase, found in Bacteroides thetaiotaomicron (strain ATCC 29148 / DSM 2079 / JCM 5827 / CCUG 10774 / NCTC 10582 / VPI-5482 / E50).